Consider the following 184-residue polypeptide: Heme transporter hrg-4 (184 aa).

The chain crosses the membrane as a helical span at residues Ile19–Lys39. The N-linked (GlcNAc...) asparagine glycan is linked to Asn42. The next 3 membrane-spanning stretches (helical) occupy residues Thr46 to Leu66, Val87 to Thr107, and Ile124 to Val146.

The protein belongs to the HRG family.

The protein localises to the cell membrane. Its function is as follows. Heme transporter that mediates heme uptake across the plasma membrane. The sequence is that of Heme transporter hrg-4 from Caenorhabditis elegans.